Here is a 124-residue protein sequence, read N- to C-terminus: Large ribosomal subunit protein bL12 (124 aa).

It belongs to the bacterial ribosomal protein bL12 family. Homodimer. Part of the ribosomal stalk of the 50S ribosomal subunit. Forms a multimeric L10(L12)X complex, where L10 forms an elongated spine to which 2 to 4 L12 dimers bind in a sequential fashion. Binds GTP-bound translation factors.

In terms of biological role, forms part of the ribosomal stalk which helps the ribosome interact with GTP-bound translation factors. Is thus essential for accurate translation. This chain is Large ribosomal subunit protein bL12, found in Desulfitobacterium hafniense (strain DSM 10664 / DCB-2).